The primary structure comprises 447 residues: Probable ethanolamine kinase B (447 aa).

Low complexity predominate over residues 178–208; the sequence is STTISTSTSTSTSTSSTSPSTSPSLENSTLS. Residues 178 to 217 form a disordered region; the sequence is STTISTSTSTSTSTSSTSPSTSPSLENSTLSPRNMNTQTS.

It belongs to the choline/ethanolamine kinase family.

It is found in the cytoplasm. It carries out the reaction ethanolamine + ATP = phosphoethanolamine + ADP + H(+). It functions in the pathway phospholipid metabolism; phosphatidylethanolamine biosynthesis; phosphatidylethanolamine from ethanolamine: step 1/3. Functionally, highly specific for ethanolamine phosphorylation. May be a rate-controlling step in phosphatidylethanolamine biosynthesis. This Dictyostelium discoideum (Social amoeba) protein is Probable ethanolamine kinase B (etnkB).